The following is a 303-amino-acid chain: Protoheme IX farnesyltransferase (303 aa).

The next 9 membrane-spanning stretches (helical) occupy residues 26–46 (VVAL…PGMV), 48–68 (IDIL…AAAV), 98–118 (AILF…VWVN), 120–140 (LTAW…TFWL), 148–168 (IVIG…AVTG), 174–194 (ALLL…ALAV), 221–241 (ILLY…THML), 244–264 (LYLL…VAMM), and 278–298 (YSIV…YLLP).

It belongs to the UbiA prenyltransferase family. Protoheme IX farnesyltransferase subfamily.

It is found in the cell inner membrane. The enzyme catalyses heme b + (2E,6E)-farnesyl diphosphate + H2O = Fe(II)-heme o + diphosphate. It functions in the pathway porphyrin-containing compound metabolism; heme O biosynthesis; heme O from protoheme: step 1/1. Functionally, converts heme B (protoheme IX) to heme O by substitution of the vinyl group on carbon 2 of heme B porphyrin ring with a hydroxyethyl farnesyl side group. The polypeptide is Protoheme IX farnesyltransferase (Saccharophagus degradans (strain 2-40 / ATCC 43961 / DSM 17024)).